The following is a 334-amino-acid chain: Lipoyl synthase (334 aa).

Residues Cys-71, Cys-76, Cys-82, Cys-97, Cys-101, Cys-104, and Ser-312 each contribute to the [4Fe-4S] cluster site. One can recognise a Radical SAM core domain in the interval 83 to 301; that stretch reads WSHGTATFMV…RQEGLRRGFR (219 aa).

The protein belongs to the radical SAM superfamily. Lipoyl synthase family. [4Fe-4S] cluster serves as cofactor.

It localises to the cytoplasm. It catalyses the reaction [[Fe-S] cluster scaffold protein carrying a second [4Fe-4S](2+) cluster] + N(6)-octanoyl-L-lysyl-[protein] + 2 oxidized [2Fe-2S]-[ferredoxin] + 2 S-adenosyl-L-methionine + 4 H(+) = [[Fe-S] cluster scaffold protein] + N(6)-[(R)-dihydrolipoyl]-L-lysyl-[protein] + 4 Fe(3+) + 2 hydrogen sulfide + 2 5'-deoxyadenosine + 2 L-methionine + 2 reduced [2Fe-2S]-[ferredoxin]. It participates in protein modification; protein lipoylation via endogenous pathway; protein N(6)-(lipoyl)lysine from octanoyl-[acyl-carrier-protein]: step 2/2. Its function is as follows. Catalyzes the radical-mediated insertion of two sulfur atoms into the C-6 and C-8 positions of the octanoyl moiety bound to the lipoyl domains of lipoate-dependent enzymes, thereby converting the octanoylated domains into lipoylated derivatives. The protein is Lipoyl synthase of Halorhodospira halophila (strain DSM 244 / SL1) (Ectothiorhodospira halophila (strain DSM 244 / SL1)).